A 485-amino-acid chain; its full sequence is NADH-quinone oxidoreductase subunit N (485 aa).

14 consecutive transmembrane segments (helical) span residues 8-28 (LIALLPLLIVGLTVVVVMLSI), 35-55 (FLNATLSVIGLNAALVSLWFV), 71-91 (GFAMLYTGLVLLASLATCTFA), 105-125 (FYLLVLIAALGGILLANANHL), 127-147 (SLFLGIELISLPLFGLVGYAF), 159-179 (YTILSAAASSFLLFGMALVYA), 203-223 (LLAGFGLMIVGLGFKLSLVPF), 235-255 (PAPVSTFLATASKIAIFGVVM), 271-291 (VVLAIIAFASIIFGNLMALSQ), 297-317 (LLGYSSISHLGYLLVALIALQ), 326-346 (VGVYLVGYLFSSLGAFGVVSL), 373-393 (AAVMTVMMLSLAGIPMTLGFI), 408-430 (WWLVGAVVVGSAIGLYYYLRVAV), and 455-475 (IVVLISALLVLVLGVWPQPLI).

Belongs to the complex I subunit 2 family. As to quaternary structure, NDH-1 is composed of 13 different subunits. Subunits NuoA, H, J, K, L, M, N constitute the membrane sector of the complex.

The protein localises to the cell inner membrane. The enzyme catalyses a quinone + NADH + 5 H(+)(in) = a quinol + NAD(+) + 4 H(+)(out). In terms of biological role, NDH-1 shuttles electrons from NADH, via FMN and iron-sulfur (Fe-S) centers, to quinones in the respiratory chain. The immediate electron acceptor for the enzyme in this species is believed to be ubiquinone. Couples the redox reaction to proton translocation (for every two electrons transferred, four hydrogen ions are translocated across the cytoplasmic membrane), and thus conserves the redox energy in a proton gradient. The polypeptide is NADH-quinone oxidoreductase subunit N (Escherichia coli O81 (strain ED1a)).